The chain runs to 167 residues: Low molecular mass early light-inducible protein HV60, chloroplastic (167 aa).

The N-terminal 33 residues, 1–33, are a transit peptide targeting the chloroplast; sequence MATMMAMSSFAGAAVLPRGSARSLPALGRRTLV. 2 helical membrane-spanning segments follow: residues 101–121 and 145–165; these read GQAW…VPLL and FAMI…TPFI.

Belongs to the ELIP/psbS family.

Its subcellular location is the plastid. The protein localises to the chloroplast membrane. Its function is as follows. Probably involved in the integration of pigments into the mature pigment-protein complexes. In Hordeum vulgare (Barley), this protein is Low molecular mass early light-inducible protein HV60, chloroplastic.